Reading from the N-terminus, the 316-residue chain is N-acetyl-gamma-glutamyl-phosphate reductase (316 aa).

Residue cysteine 136 is part of the active site.

This sequence belongs to the NAGSA dehydrogenase family. Type 1 subfamily.

It localises to the cytoplasm. The enzyme catalyses N-acetyl-L-glutamate 5-semialdehyde + phosphate + NADP(+) = N-acetyl-L-glutamyl 5-phosphate + NADPH + H(+). The protein operates within amino-acid biosynthesis; L-arginine biosynthesis; N(2)-acetyl-L-ornithine from L-glutamate: step 3/4. In terms of biological role, catalyzes the NADPH-dependent reduction of N-acetyl-5-glutamyl phosphate to yield N-acetyl-L-glutamate 5-semialdehyde. The polypeptide is N-acetyl-gamma-glutamyl-phosphate reductase (Xanthomonas euvesicatoria pv. vesicatoria (strain 85-10) (Xanthomonas campestris pv. vesicatoria)).